Here is a 146-residue protein sequence, read N- to C-terminus: UPF0178 protein CTC_02403 (146 aa).

Belongs to the UPF0178 family.

This is UPF0178 protein CTC_02403 from Clostridium tetani (strain Massachusetts / E88).